A 512-amino-acid chain; its full sequence is Maturase K (512 aa).

The protein belongs to the intron maturase 2 family. MatK subfamily.

It is found in the plastid. The protein resides in the chloroplast. Usually encoded in the trnK tRNA gene intron. Probably assists in splicing its own and other chloroplast group II introns. This is Maturase K from Ginkgo biloba (Ginkgo).